The following is a 559-amino-acid chain: Kelch repeat and BTB domain-containing protein 2 (559 aa).

The BTB domain occupies 26-95; it reads CDVIITIGDG…LYNRHISSMN (70 aa). Positions 128 to 223 constitute a BACK domain; sequence CIYIYHRLYE…CIDIQNLDKK (96 aa). Kelch repeat units follow at residues 305–352, 353–399, and 401–463; these read EIII…VIDD, MIYA…VFDQ, and IYII…SHKD.

Interacts (via BTB domain) with host CUL3.

It is found in the host cytoplasm. Functionally, probable substrate-specific adapter of CUL3-containing E3 ubiquitin-protein ligases which mediate the ubiquitination and subsequent proteasomal degradation of host target proteins. In Mus musculus (Mouse), this protein is Kelch repeat and BTB domain-containing protein 2 (KBTB2).